The sequence spans 76 residues: Anaredoxin (76 aa).

The 43-residue stretch at 24 to 66 (CMVCWEVNSKANGHHLIPYSEGGSADIQNMMTLCPSCHTKYHK) folds into the HNH domain.

This sequence belongs to the HNH nuclease family.

In terms of biological role, putative P-450 reductase. The chain is Anaredoxin from Nostoc sp. (strain PCC 7120 / SAG 25.82 / UTEX 2576).